The chain runs to 381 residues: Early boundary activity protein 2 (381 aa).

The tract at residues 210–245 is disordered; that stretch reads NDAEDVPAPPSKRPRHMSTSSSESHIPDTASEKDEK. Positions 268–365 constitute a BEN domain; it reads PNGTQITAHQ…TKCADTAKKY (98 aa).

In terms of assembly, the heterotrimeric Elba complex consists of Elba1, Elba2 and Elba3.

The protein localises to the nucleus. In terms of biological role, the heterotrimeric Elba complex is required for chromatin domain boundary function during early embryogenesis. It binds to a 8-bp sequence 5'-CCAATAAG-3' in the Fab-7 insulator or boundary element in the bithorax complex and contributes to its insulator or boundary activity. Elba2 can act as a transcriptional repressor and binds the palindromic sequence 5'-CCAATTGG-3' to mediate transcriptional repression. This Drosophila melanogaster (Fruit fly) protein is Early boundary activity protein 2.